A 346-amino-acid polypeptide reads, in one-letter code: MIKISIDAMGGDFGPEVVIPGAAKAFERHPDIRFIFFGLPAQVEPVLARYPKLKEASEFRASEVAIGMDDKPSQALRAGRGKSSMWQAIEAVKTGDADACVSAGNTGALMAMSKFCLRMMSDVERPAIAGIWPTLRGESIVLDIGATIGADARQLVDYAVMGAGMARALFEVRKPTVGLLNVGTEEVKGLDEIKEAGQILCDTPLDGLEYSGFVEGNDIGKGTVDVVVTEGFTGNIALKTAEGTARQMAELLRQAMSRTLLAKIGHVFAKGAFDRLREKMDPNKVNGGVFLGLSGIVIKSHGGANAEGFCSAVEVGYDMVRNRLLEKIEADLAHFHHSHSHVSSKA.

Belongs to the PlsX family. As to quaternary structure, homodimer. Probably interacts with PlsY.

It localises to the cytoplasm. It carries out the reaction a fatty acyl-[ACP] + phosphate = an acyl phosphate + holo-[ACP]. The protein operates within lipid metabolism; phospholipid metabolism. Catalyzes the reversible formation of acyl-phosphate (acyl-PO(4)) from acyl-[acyl-carrier-protein] (acyl-ACP). This enzyme utilizes acyl-ACP as fatty acyl donor, but not acyl-CoA. This is Phosphate acyltransferase from Brucella ovis (strain ATCC 25840 / 63/290 / NCTC 10512).